Reading from the N-terminus, the 30-residue chain is Cycloviolacin-H3 (30 aa).

Residues 1–30 (GLPVCGETCFGGTCNTPGCICDPWPVCTRN) constitute a cross-link (cyclopeptide (Gly-Asn)). 3 disulfide bridges follow: Cys-5–Cys-19, Cys-9–Cys-21, and Cys-14–Cys-27.

In terms of processing, this is a cyclic peptide.

Probably participates in a plant defense mechanism. This Viola hederacea (Australian violet) protein is Cycloviolacin-H3.